The sequence spans 288 residues: Phytanoyl-CoA dioxygenase domain-containing protein 1 homolog (288 aa).

Residues Lys95, Met134, 149 to 151, and Trp167 each bind 2-oxoglutarate; that span reads HVD. His149 and Asp151 together coordinate Fe cation. Residue His242 coordinates Fe cation. The 2-oxoglutarate site is built by Ser244 and Arg253.

This sequence belongs to the PhyH family. PHYHD1 subfamily. Requires Fe cation as cofactor.

Has alpha-ketoglutarate-dependent dioxygenase activity. Does not show detectable activity towards fatty acid CoA thioesters. Is not expected to be active with phytanoyl CoA. This Caenorhabditis briggsae protein is Phytanoyl-CoA dioxygenase domain-containing protein 1 homolog.